We begin with the raw amino-acid sequence, 104 residues long: MVTQLKSASEYDSALASGDKLVVVDFFATWCGPCKMIAPMIEKFAEQYSDAAFYKLDVDEVSDVAQKAEVSSMPTLIFYKGGKEVTRVVGANPAAIKQAIASNV.

Residues 2 to 104 enclose the Thioredoxin domain; it reads VTQLKSASEY…AIKQAIASNV (103 aa). Residues Cys-31 and Cys-34 each act as nucleophile in the active site. Cys-31 and Cys-34 are oxidised to a cystine. Ser-62 carries the post-translational modification Phosphoserine. Glycyl lysine isopeptide (Lys-Gly) (interchain with G-Cter in ubiquitin) cross-links involve residues Lys-67 and Lys-97.

The protein belongs to the thioredoxin family. In terms of assembly, monomer. Part of the heterodimeric LMA1 complex together with the proteinase inhibitor PBI2. LMA1 binds to the ATPase SEC18. Reversible disulfide bond formation between Cys-31 and Cys-34, reverted by thioredoxin reductase TRR1 using NADPH as hydrogen donor.

It is found in the cytoplasm. Its subcellular location is the golgi apparatus membrane. The protein localises to the nucleus. Participates as a hydrogen donor in redox reactions through the reversible oxidation of its active center dithiol to a disulfide, accompanied by the transfer of 2 electrons and 2 protons. It is involved in many cellular processes, including deoxyribonucleotide synthesis, repair of oxidatively damaged proteins, protein folding, sulfur metabolism, and redox homeostasis. Thioredoxin-dependent enzymes include phosphoadenosine-phosphosulfate reductase MET16, alkyl-hydroperoxide reductase DOT5, thioredoxin peroxidases TSA1 and TSA2, alkyl hydroperoxide reductase AHP1, and peroxiredoxin HYR1. Thioredoxin is also involved in protection against reducing stress. As part of the LMA1 complex, it is involved in the facilitation of vesicle fusion such as homotypic vacuole and ER-derived COPII vesicle fusion with the Golgi. This activity does not require the redox mechanism. Through its capacity to inactivate the stress response transcription factor YAP1 and its regulator the hydroperoxide stress sensor HYR1, it is involved in feedback regulation of stress response gene expression upon oxidative stress. The chain is Thioredoxin-2 (TRX2) from Saccharomyces cerevisiae (strain ATCC 204508 / S288c) (Baker's yeast).